Consider the following 105-residue polypeptide: Urease subunit beta (105 aa).

It belongs to the urease beta subunit family. Heterotrimer of UreA (gamma), UreB (beta) and UreC (alpha) subunits. Three heterotrimers associate to form the active enzyme.

It is found in the cytoplasm. It catalyses the reaction urea + 2 H2O + H(+) = hydrogencarbonate + 2 NH4(+). It participates in nitrogen metabolism; urea degradation; CO(2) and NH(3) from urea (urease route): step 1/1. This chain is Urease subunit beta, found in Shewanella halifaxensis (strain HAW-EB4).